The following is a 151-amino-acid chain: RNA polymerase-binding transcription factor DksA (151 aa).

Residues Cys114, Cys117, Cys135, and Cys138 each coordinate Zn(2+). A dksA C4-type zinc finger spans residues 114-138 (CNSCSVEIGIRRLEARPTADLCIDC).

The protein belongs to the DksA family. Interacts directly with the RNA polymerase.

Its subcellular location is the cytoplasm. In terms of biological role, transcription factor that acts by binding directly to the RNA polymerase (RNAP). Required for negative regulation of rRNA expression and positive regulation of several amino acid biosynthesis promoters. Also required for regulation of fis expression. The protein is RNA polymerase-binding transcription factor DksA of Buchnera aphidicola subsp. Acyrthosiphon pisum (strain APS) (Acyrthosiphon pisum symbiotic bacterium).